A 275-amino-acid chain; its full sequence is Epidermal growth factor-like protein 7 (275 aa).

Residues Met-1–Thr-21 form the signal peptide. Residues Ser-28–Ala-105 form the EMI domain. Cystine bridges form between Cys-32-Cys-90, Cys-57-Cys-63, Cys-89-Cys-103, Cys-108-Cys-118, Cys-112-Cys-124, Cys-126-Cys-135, Cys-142-Cys-153, and Cys-149-Cys-162. Positions Gly-104 to Gln-136 constitute an EGF-like 1 domain. The Cell attachment site signature appears at Gln-131–Asp-133. One can recognise an EGF-like 2; calcium-binding domain in the interval Asp-138–Leu-178. The disordered stretch occupies residues Asp-173–Gly-193. A coiled-coil region spans residues Ser-196–Leu-220.

In terms of assembly, interacts with ITGAV/ITGB3 in an RGD-dependent manner, increasing endothelial cell's motility. In terms of tissue distribution, expressed specifically by endothelial cells of the highly vascularized organs heart, lung and kidney.

Its subcellular location is the secreted. The protein resides in the extracellular space. In terms of biological role, regulates vascular tubulogenesis in vivo. Inhibits platelet-derived growth factor (PDGF)-BB-induced smooth muscle cell migration and promotes endothelial cell adhesion to the extracellular matrix and angiogenesis. This is Epidermal growth factor-like protein 7 (Egfl7) from Mus musculus (Mouse).